We begin with the raw amino-acid sequence, 383 residues long: Polyketide synthase 4 (383 aa).

Catalysis depends on C164, which acts as the Nucleophile and monoketide coumarate intermediate.

Belongs to the thiolase-like superfamily. Chalcone/stilbene synthases family. As to quaternary structure, homodimer. Expressed in fruits.

The catalysed reaction is 4-coumaroyl-CoA + malonyl-CoA + H2O + H(+) = 4-hydroxybenzalacetone + 2 CO2 + 2 CoA. The enzyme catalyses (E)-4-coumaroyl-CoA + 3 malonyl-CoA + 3 H(+) = 2',4,4',6'-tetrahydroxychalcone + 3 CO2 + 4 CoA. The protein operates within secondary metabolite biosynthesis; flavonoid biosynthesis. Its activity is regulated as follows. Inhibited by glutathione. Bifunctional polyketide synthase producing both 4-hydroxybenzalacetone and naringenin chalcone. Can use p-coumaryl-CoA and ferulyl-CoA as substrates. Catalyzes the initial key reaction step in the biosynthesis of phenylbutanoids. This is Polyketide synthase 4 (PKS4) from Rubus idaeus (Raspberry).